The chain runs to 316 residues: Lipoyl synthase (316 aa).

Basic and acidic residues predominate over residues 1 to 19 (MRDLKIPEQRHPEKAHRPD). The interval 1–31 (MRDLKIPEQRHPEKAHRPDNAQPKKPSWIRV) is disordered. 7 residues coordinate [4Fe-4S] cluster: C55, C60, C66, C81, C85, C88, and S295. One can recognise a Radical SAM core domain in the interval 67 to 284 (WSQGHATMMI…EKAAYGKGFL (218 aa)).

The protein belongs to the radical SAM superfamily. Lipoyl synthase family. Requires [4Fe-4S] cluster as cofactor.

The protein resides in the cytoplasm. The enzyme catalyses [[Fe-S] cluster scaffold protein carrying a second [4Fe-4S](2+) cluster] + N(6)-octanoyl-L-lysyl-[protein] + 2 oxidized [2Fe-2S]-[ferredoxin] + 2 S-adenosyl-L-methionine + 4 H(+) = [[Fe-S] cluster scaffold protein] + N(6)-[(R)-dihydrolipoyl]-L-lysyl-[protein] + 4 Fe(3+) + 2 hydrogen sulfide + 2 5'-deoxyadenosine + 2 L-methionine + 2 reduced [2Fe-2S]-[ferredoxin]. It participates in protein modification; protein lipoylation via endogenous pathway; protein N(6)-(lipoyl)lysine from octanoyl-[acyl-carrier-protein]: step 2/2. Catalyzes the radical-mediated insertion of two sulfur atoms into the C-6 and C-8 positions of the octanoyl moiety bound to the lipoyl domains of lipoate-dependent enzymes, thereby converting the octanoylated domains into lipoylated derivatives. The protein is Lipoyl synthase of Ruegeria sp. (strain TM1040) (Silicibacter sp.).